We begin with the raw amino-acid sequence, 279 residues long: MAFQGTSRTLTQQSSAATSDDLQKILFSPEAIKKMATECDLGRHHWMRADNAISVRPLVPEVTHGRIASFFKSGYDVGELCSKGYMSVPQVLCAVTRTVSTDAEGSLRIYLADLGDKELSPIDGQCVSLHNHDLPALVSFQPTYDCPMETVGNRKRCFAVVIERHGYIGYTGTTASVCSNWQARFSSKNNNYTHIAAGKTLVLPFNRLAEQTKPSAVARLLKSQLNNIESSQYLLTNVKINQNARSESEDLNVESPPAAIGRFSASRSEAFRPQVVNGL.

Belongs to the cucumovirus movement protein family.

It localises to the host cell junction. The protein localises to the host plasmodesma. Functionally, transports viral genome to neighboring plant cells directly through plasmosdesmata, without any budding. The movement protein allows efficient cell to cell propagation, by bypassing the host cell wall barrier. Acts by forming a tubular structure at the host plasmodesmata, enlarging it enough to allow free passage of virion capsids. This chain is Movement protein, found in Cucumber mosaic virus (strain M) (CMV).